The following is a 539-amino-acid chain: Probable protein kinase UbiB (539 aa).

Residues 125–493 (RFDVEPLASA…RRRQGDRWAL (369 aa)) form the Protein kinase domain. Residues 131–139 (LASASVAQV) and lysine 153 contribute to the ATP site. Aspartate 288 serves as the catalytic Proton acceptor. The next 2 membrane-spanning stretches (helical) occupy residues 495–515 (LLGAGLLGGGAVLAASAAEAA) and 517–537 (LAAPAAWPAWLMLAAGLYLIV).

Belongs to the ABC1 family. UbiB subfamily.

The protein localises to the cell inner membrane. The protein operates within cofactor biosynthesis; ubiquinone biosynthesis [regulation]. In terms of biological role, is probably a protein kinase regulator of UbiI activity which is involved in aerobic coenzyme Q (ubiquinone) biosynthesis. The chain is Probable protein kinase UbiB from Pseudomonas putida (strain W619).